A 374-amino-acid chain; its full sequence is MDGLGVRNETTFNDWKARIQSASRFEHVFDLATDRQRCTPDEVKNDSLWSKYMFPKPFAPTTLKSYKSRLIKIIFSLVEEADLQNPAYDLDREFDSVEFQHLLVSPKELCKRMLELRSVTKETLQLTINFYTNAMNLPEFKIPRMVMLPRDKELKTIREKEKNFMLKNAIDTILNFIDSKIKLMNSDYVHDRGLIRGAIVFCIMLGTGMRINEARQLSVDDLNVLIKKGKLRSDTIGLKRKRSRKNTLNNIKTKPLELAREIYARNPTVLQISKNTSTPFKDFRRLLDEAGVEMERPRSNMIRHYLSSNLYNSGVPLQKVARLMNHESPASTKPYLNKYNFDESSSDEESGGNNRDSSTGSSANSSSLYYQTGD.

Residues 169-349 enclose the Tyr recombinase domain; it reads AIDTILNFID…NFDESSSDEE (181 aa). Catalysis depends on residues R210, K239, R303, and H326. A disordered region spans residues 328–374; sequence SPASTKPYLNKYNFDESSSDEESGGNNRDSSTGSSANSSSLYYQTGD. Y335 functions as the O-(3'-phospho-DNA)-tyrosine intermediate in the catalytic mechanism. The span at 357-367 shows a compositional bias: low complexity; the sequence is SSTGSSANSSS.

Belongs to the 'phage' integrase family.

Involved in very late gene activation. The polypeptide is Very late expression factor 1 (VLF-1) (Orgyia pseudotsugata (Douglas-fir tussock moth)).